A 105-amino-acid chain; its full sequence is UPF0145 protein LPC_0273 (105 aa).

This sequence belongs to the UPF0145 family.

This chain is UPF0145 protein LPC_0273, found in Legionella pneumophila (strain Corby).